Here is a 305-residue protein sequence, read N- to C-terminus: Carbonic anhydrase 4 (305 aa).

Residues 1–17 (MQLLLALLALAYVAPST) form the signal peptide. One can recognise an Alpha-carbonic anhydrase domain in the interval 20–278 (SGWCYEIQTK…LGKRQVFKSH (259 aa)). Disulfide bonds link Cys23–Cys35 and Cys45–Cys222. His87 serves as the catalytic Proton donor/acceptor. Residues His114 and His116 each coordinate Zn(2+). Residue Asn123 is glycosylated (N-linked (GlcNAc...) asparagine). His139 contributes to the Zn(2+) binding site. Residue Asn214 is glycosylated (N-linked (GlcNAc...) asparagine). Residue 218-219 (TT) participates in substrate binding. A lipid anchor (GPI-anchor amidated serine) is attached at Ser277. The propeptide at 278 to 305 (HAPGQLLSLPLPTLLVPTLTCLVANFLQ) is removed in mature form.

Belongs to the alpha-carbonic anhydrase family. As to quaternary structure, interacts with SLC4A4. It depends on Zn(2+) as a cofactor.

Its subcellular location is the cell membrane. The catalysed reaction is hydrogencarbonate + H(+) = CO2 + H2O. With respect to regulation, inhibited by acetazolamide. In terms of biological role, catalyzes the reversible hydration of carbon dioxide into bicarbonate and protons and thus is essential to maintaining intracellular and extracellular pH. May stimulate the sodium/bicarbonate transporter activity of SLC4A4 that acts in pH homeostasis. It is essential for acid overload removal from the retina and retina epithelium, and acid release in the choriocapillaris in the choroid. This chain is Carbonic anhydrase 4 (Ca4), found in Mus musculus (Mouse).